We begin with the raw amino-acid sequence, 150 residues long: Large ribosomal subunit protein bL9 (150 aa).

The protein belongs to the bacterial ribosomal protein bL9 family.

In terms of biological role, binds to the 23S rRNA. This chain is Large ribosomal subunit protein bL9, found in Limosilactobacillus reuteri (strain DSM 20016) (Lactobacillus reuteri).